Consider the following 183-residue polypeptide: CyanoP (183 aa).

An N-terminal signal peptide occupies residues 1–19; it reads MLQRFFATALAIFVVLLGG. Cys20 carries N-palmitoyl cysteine lipidation. A lipid anchor (S-diacylglycerol cysteine) is attached at Cys20. Residues Asp31, Asp34, Asp54, His58, Thr63, Glu87, Asp91, His142, Glu163, and Glu164 each contribute to the Zn(2+) site.

The protein belongs to the PsbP family. CyanoP subfamily. In terms of assembly, monomer. Present in very small amounts in PSII. It depends on Zn(2+) as a cofactor.

The protein resides in the cellular thylakoid membrane. In terms of biological role, plays a role in the early stages of photosystem II (PSII) assembly; binds to D2 (psbD) and may facilitate its incorporation into PSII. Present in less than 1% of PSII preparations. This Thermosynechococcus vestitus (strain NIES-2133 / IAM M-273 / BP-1) protein is CyanoP.